The sequence spans 274 residues: 5-deoxy-glucuronate isomerase (274 aa).

This sequence belongs to the isomerase IolB family.

It carries out the reaction 5-deoxy-D-glucuronate = 5-dehydro-2-deoxy-D-gluconate. The protein operates within polyol metabolism; myo-inositol degradation into acetyl-CoA; acetyl-CoA from myo-inositol: step 4/7. Its function is as follows. Involved in the isomerization of 5-deoxy-glucuronate (5DG) to 5-dehydro-2-deoxy-D-gluconate (DKG or 2-deoxy-5-keto-D-gluconate). This chain is 5-deoxy-glucuronate isomerase, found in Geobacillus thermodenitrificans (strain NG80-2).